We begin with the raw amino-acid sequence, 118 residues long: Large ribosomal subunit protein bL19 (118 aa).

Belongs to the bacterial ribosomal protein bL19 family.

This protein is located at the 30S-50S ribosomal subunit interface and may play a role in the structure and function of the aminoacyl-tRNA binding site. This Onion yellows phytoplasma (strain OY-M) protein is Large ribosomal subunit protein bL19.